A 215-amino-acid polypeptide reads, in one-letter code: Ras-related protein Rab-5B (215 aa).

Threonine 2 is subject to N-acetylthreonine. GTP-binding residues include serine 29, alanine 30, glycine 32, lysine 33, serine 34, serine 35, histidine 46, glutamate 47, threonine 52, and glycine 78. Serine 34 contributes to the Mg(2+) binding site. Short sequence motifs (switch) lie at residues 44 to 56 (QFHE…IGAA) and 77 to 93 (AGQE…YRGA). Threonine 52 contacts Mg(2+). Residue serine 84 is modified to Phosphoserine; by LRRK2. Asparagine 133, lysine 134, aspartate 136, alanine 164, and lysine 165 together coordinate GTP. A disordered region spans residues 186–215 (PQNLGGAAGRSRGVDLHEQSQQNKSQCCSN). A compositionally biased stretch (low complexity) spans 204–215 (QSQQNKSQCCSN). S-geranylgeranyl cysteine attachment occurs at residues cysteine 212 and cysteine 213.

The protein belongs to the small GTPase superfamily. Rab family. As to quaternary structure, binds EEA1. Interacts with RIN2 and RIN3, which probably regulate its pathway, possibly by acting as GEFs. Interacts with GDI1, GDI2, CHML and CHM; phosphorylation at Ser-84 disrupts this interaction. The cofactor is Mg(2+). Phosphorylation of Ser-84 in the switch II region by LRRK2 prevents the association of RAB regulatory proteins, including CHM, CHML and RAB GDP dissociation inhibitors GDI1 and GDI2. Post-translationally, (Microbial infection) Glycosylated on arginine residues by S.typhimurium protein Ssek3.

The protein localises to the cell membrane. Its subcellular location is the early endosome membrane. It localises to the melanosome. The enzyme catalyses GTP + H2O = GDP + phosphate + H(+). With respect to regulation, regulated by guanine nucleotide exchange factors (GEFs) which promote the exchange of bound GDP for free GTP. Regulated by GTPase activating proteins (GAPs) which increase the GTP hydrolysis activity. Inhibited by GDP dissociation inhibitors (GDIs). In terms of biological role, the small GTPases Rab are key regulators of intracellular membrane trafficking, from the formation of transport vesicles to their fusion with membranes. Rabs cycle between an inactive GDP-bound form and an active GTP-bound form that is able to recruit to membranes different sets of downstream effectors directly responsible for vesicle formation, movement, tethering and fusion. The chain is Ras-related protein Rab-5B from Homo sapiens (Human).